Reading from the N-terminus, the 74-residue chain is LMTGVESARDAYIAKPHNCVYECFDAFSSYCNGVCTKNGAKSGYCQILGTYGNGCWCIALPGNVPIRIPGKCHR.

The first 7 residues, 1 to 7 (LMTGVES), serve as a signal peptide directing secretion. The LCN-type CS-alpha/beta domain occupies 9-73 (RDAYIAKPHN…VPIRIPGKCH (65 aa)). Intrachain disulfides connect Cys19–Cys72, Cys23–Cys45, Cys31–Cys55, and Cys35–Cys57. A propeptide (removed by a carboxypeptidase) is located at residue Arg74.

Belongs to the long (4 C-C) scorpion toxin superfamily. Sodium channel inhibitor family. Alpha subfamily. Expressed by the venom gland.

The protein resides in the secreted. Functionally, alpha toxins bind voltage-independently at site-3 of sodium channels (Nav) and inhibit the inactivation of the activated channels, thereby blocking neuronal transmission. In Mesobuthus eupeus (Lesser Asian scorpion), this protein is Sodium channel neurotoxin MeuNaTxalpha-6.